The primary structure comprises 181 residues: ATP synthase subunit delta (181 aa).

The protein belongs to the ATPase delta chain family. As to quaternary structure, F-type ATPases have 2 components, F(1) - the catalytic core - and F(0) - the membrane proton channel. F(1) has five subunits: alpha(3), beta(3), gamma(1), delta(1), epsilon(1). F(0) has three main subunits: a(1), b(2) and c(10-14). The alpha and beta chains form an alternating ring which encloses part of the gamma chain. F(1) is attached to F(0) by a central stalk formed by the gamma and epsilon chains, while a peripheral stalk is formed by the delta and b chains. The F(1)F(0) complex interacts with SpoIIIJ and YqjG; YqgA is found in the same complex. Interacts with FloT.

The protein resides in the cell membrane. The protein localises to the membrane raft. Functionally, f(1)F(0) ATP synthase produces ATP from ADP in the presence of a proton or sodium gradient. F-type ATPases consist of two structural domains, F(1) containing the extramembraneous catalytic core and F(0) containing the membrane proton channel, linked together by a central stalk and a peripheral stalk. During catalysis, ATP synthesis in the catalytic domain of F(1) is coupled via a rotary mechanism of the central stalk subunits to proton translocation. This protein is part of the stalk that links CF(0) to CF(1). It either transmits conformational changes from CF(0) to CF(1) or is implicated in proton conduction. The polypeptide is ATP synthase subunit delta (Bacillus subtilis (strain 168)).